A 230-amino-acid chain; its full sequence is Probable tetraspanin tspD (230 aa).

At 1–20 the chain is on the cytoplasmic side; it reads MVEYLPSTPRYLKVPLIILN. Residues 21–41 form a helical membrane-spanning segment; that stretch reads VILWLLGLVLVIIGGICVGFF. Topologically, residues 42–65 are extracellular; it reads SRFKELQEVGGVSESIKSISVSLP. The helical transmembrane segment at 66 to 86 threads the bilayer; it reads AGVLSIGIFFMVLTVAGCIVA. The Cytoplasmic segment spans residues 87–90; the sequence is YKEK. Residues 91 to 111 form a helical membrane-spanning segment; the sequence is MVGLVFYTILMLVLLVVLIGI. The Extracellular portion of the chain corresponds to 112–200; the sequence is GGEALTYHNA…VNSKLYLVGS (89 aa). Residues Asn133, Asn138, Asn163, and Asn179 are each glycosylated (N-linked (GlcNAc...) asparagine). The helical transmembrane segment at 201–221 threads the bilayer; the sequence is AGVAIGVIELVSLMFALFLIV. At 222–230 the chain is on the cytoplasmic side; sequence RLYKSNSYR.

This sequence belongs to the tetraspanin (TM4SF) family.

Its subcellular location is the membrane. The polypeptide is Probable tetraspanin tspD (tspD) (Dictyostelium discoideum (Social amoeba)).